We begin with the raw amino-acid sequence, 337 residues long: Monoacylglycerol lipase ABHD6 (337 aa).

The Extracellular segment spans residues 1 to 8 (MDLDVVNM). A helical; Signal-anchor for type II membrane protein membrane pass occupies residues 9–29 (FVIAGGTLAIPILAFVASFLL). Topologically, residues 30–337 (WPSALIRIYY…HNPDNNKKLN (308 aa)) are cytoplasmic. Serine 148 serves as the catalytic Nucleophile. Residues aspartate 278 and histidine 306 each act as charge relay system in the active site.

This sequence belongs to the AB hydrolase superfamily.

It is found in the late endosome membrane. The protein resides in the lysosome membrane. It localises to the mitochondrion membrane. It catalyses the reaction Hydrolyzes glycerol monoesters of long-chain fatty acids.. It carries out the reaction 1-octanoylglycerol + H2O = octanoate + glycerol + H(+). The enzyme catalyses 1-decanoylglycerol + H2O = decanoate + glycerol + H(+). The catalysed reaction is 1-dodecanoylglycerol + H2O = dodecanoate + glycerol + H(+). It catalyses the reaction 1-tetradecanoylglycerol + H2O = tetradecanoate + glycerol + H(+). It carries out the reaction 2-hexadecanoylglycerol + H2O = glycerol + hexadecanoate + H(+). The enzyme catalyses 2-(9Z-octadecenoyl)-glycerol + H2O = glycerol + (9Z)-octadecenoate + H(+). The catalysed reaction is 1-(9Z-octadecenoyl)-glycerol + H2O = glycerol + (9Z)-octadecenoate + H(+). It catalyses the reaction 2-(9Z,12Z-octadecadienoyl)-glycerol + H2O = (9Z,12Z)-octadecadienoate + glycerol + H(+). It carries out the reaction 2-(5Z,8Z,11Z,14Z-eicosatetraenoyl)-glycerol + H2O = glycerol + (5Z,8Z,11Z,14Z)-eicosatetraenoate + H(+). The enzyme catalyses 1-(5Z,8Z,11Z,14Z-eicosatetraenoyl)-glycerol + H2O = glycerol + (5Z,8Z,11Z,14Z)-eicosatetraenoate + H(+). The catalysed reaction is 1-(9Z,12Z-octadecadienoyl)-glycerol + H2O = (9Z,12Z)-octadecadienoate + glycerol + H(+). It catalyses the reaction 3-(9Z-octadecenoyl)-sn-glycero-1-phospho-(3'-(9Z-octadecenoyl)-1'-sn-glycerol) + H2O = 3-(9Z-octadecenoyl)-sn-glycero-1-phospho-(1'-sn-glycerol) + (9Z)-octadecenoate + H(+). It carries out the reaction (S,S)-2-(9Z-octadecenoyl)-sn-glycero-1-phospho-(2'-(9Z-octadecenoyl)-1'-sn-glycerol) + H2O = (S,S)-2-(9Z-octadecenoyl)-sn-glycero-1-phospho-(1'-sn-glycerol) + (9Z)-octadecenoate + H(+). The enzyme catalyses (R,R)-2-(9Z-octadecenoyl)-sn-glycero-3-phospho-(2'-(9Z-octadecenoyl)-3'-sn-glycerol) + H2O = (R,R)-2-(9Z-octadecenoyl)-sn-glycero-3-phospho-(3'-sn-glycerol) + (9Z)-octadecenoate + H(+). In terms of biological role, lipase that preferentially hydrolysis medium-chain saturated monoacylglycerols including 2-arachidonoylglycerol. Through 2-arachidonoylglycerol degradation may regulate endocannabinoid signaling pathways. Also has a lysophosphatidyl lipase activity with a preference for lysophosphatidylglycerol among other lysophospholipids. Also able to degrade bis(monoacylglycero)phosphate (BMP) and constitutes the major enzyme for BMP catabolism. BMP, also known as lysobisphosphatidic acid, is enriched in late endosomes and lysosomes and plays a key role in the formation of intraluminal vesicles and in lipid sorting. The chain is Monoacylglycerol lipase ABHD6 from Rattus norvegicus (Rat).